Reading from the N-terminus, the 284-residue chain is Bifunctional protein FolD 1 (284 aa).

NADP(+) is bound by residues 166–168 (GAS) and Ile-232.

Belongs to the tetrahydrofolate dehydrogenase/cyclohydrolase family. Homodimer.

The catalysed reaction is (6R)-5,10-methylene-5,6,7,8-tetrahydrofolate + NADP(+) = (6R)-5,10-methenyltetrahydrofolate + NADPH. The enzyme catalyses (6R)-5,10-methenyltetrahydrofolate + H2O = (6R)-10-formyltetrahydrofolate + H(+). The protein operates within one-carbon metabolism; tetrahydrofolate interconversion. Its function is as follows. Catalyzes the oxidation of 5,10-methylenetetrahydrofolate to 5,10-methenyltetrahydrofolate and then the hydrolysis of 5,10-methenyltetrahydrofolate to 10-formyltetrahydrofolate. In Ectopseudomonas mendocina (strain ymp) (Pseudomonas mendocina), this protein is Bifunctional protein FolD 1.